The primary structure comprises 394 residues: 1-deoxy-D-xylulose 5-phosphate reductoisomerase (394 aa).

Residues threonine 12, glycine 13, serine 14, isoleucine 15, glycine 38, and asparagine 126 each contribute to the NADPH site. Position 127 (lysine 127) interacts with 1-deoxy-D-xylulose 5-phosphate. Residue glutamate 128 participates in NADPH binding. A Mn(2+)-binding site is contributed by aspartate 151. Residues serine 152, glutamate 153, serine 177, and histidine 200 each contribute to the 1-deoxy-D-xylulose 5-phosphate site. Glutamate 153 serves as a coordination point for Mn(2+). Glycine 206 contacts NADPH. 1-deoxy-D-xylulose 5-phosphate-binding residues include serine 213, asparagine 218, lysine 219, and glutamate 222. Position 222 (glutamate 222) interacts with Mn(2+).

It belongs to the DXR family. It depends on Mg(2+) as a cofactor. Mn(2+) is required as a cofactor.

The catalysed reaction is 2-C-methyl-D-erythritol 4-phosphate + NADP(+) = 1-deoxy-D-xylulose 5-phosphate + NADPH + H(+). It functions in the pathway isoprenoid biosynthesis; isopentenyl diphosphate biosynthesis via DXP pathway; isopentenyl diphosphate from 1-deoxy-D-xylulose 5-phosphate: step 1/6. Functionally, catalyzes the NADPH-dependent rearrangement and reduction of 1-deoxy-D-xylulose-5-phosphate (DXP) to 2-C-methyl-D-erythritol 4-phosphate (MEP). The protein is 1-deoxy-D-xylulose 5-phosphate reductoisomerase of Beutenbergia cavernae (strain ATCC BAA-8 / DSM 12333 / CCUG 43141 / JCM 11478 / NBRC 16432 / NCIMB 13614 / HKI 0122).